The chain runs to 332 residues: UBA domain-containing protein Mud1 (332 aa).

D127 is an active-site residue. Residues 246 to 298 (GLGIEPASKASASSPNPQSGTRLGTKESVAPNNEGSSNPPSLVNPPTDPGLNS) are disordered. Low complexity predominate over residues 251-264 (PASKASASSPNPQS). Positions 275–286 (APNNEGSSNPPS) are enriched in polar residues. The 42-residue stretch at 291 to 332 (PTDPGLNSKIAQLVSMGFDPLEAAQALDAANGDLDVAASFLL) folds into the UBA domain.

Belongs to the DDI1 family. In terms of assembly, homodimer. Interacts (via UBA domain) with polyubiquitin (polyUb) chains (via Lys-48-linked polyUbs). Has weak binding affinity for monoubiquitin. According to another report, has no affinity for monoubiquitin.

The protein resides in the cytoplasm. Its subcellular location is the cell membrane. Functionally, recognizes and binds polyubiquitin chains. Acts as a linker between the 19S proteasome and polyubiquitinated proteins via UBA domain interactions with ubiquitin for their subsequent degradation. Aspartic protease. Appears to act as negative regulator of constitutive exocytosis. May act at the level of secretory vesicle docking and fusion as a competitive inhibitor of SNARE assembly. Required for S-phase checkpoint control. The chain is UBA domain-containing protein Mud1 from Schizosaccharomyces pombe (strain 972 / ATCC 24843) (Fission yeast).